The chain runs to 424 residues: Histidine--tRNA ligase (424 aa).

This sequence belongs to the class-II aminoacyl-tRNA synthetase family. As to quaternary structure, homodimer.

Its subcellular location is the cytoplasm. The enzyme catalyses tRNA(His) + L-histidine + ATP = L-histidyl-tRNA(His) + AMP + diphosphate + H(+). This chain is Histidine--tRNA ligase, found in Marinomonas sp. (strain MWYL1).